Reading from the N-terminus, the 687-residue chain is MSKIRVYELAKELNVSSKDLITLLMDEFGVEVKNHMSTIEDEEAQLIKELLATKPEYIEGSLEDSKSLVDEYEEILQNELNKAKKKRKKNKREDKDDENEELETEVIEIGETITVKELAEKLNKPSNDVIRTLIFSGVMAAINQEIDFATAEKVCESYGVILEKLEVTEELEAVEAEDDDEENLTKRPPIVTVMGHVDHGKTSLLDAIRKAKVTDTEAGGITQHIGAYTININGEEITFLDTPGHEAFTAMRARGAQVTDVVILVVAADDGIMPQTKEAINHCKAAGVPMVVAINKIDKPGANPDRVKQELTEHGLVVEEWGGDTICEEVSAKSNLNIEKLLEMVLLTAEMLELKANKERKAKGTVIEAKLDKGRGSVATLLVQNGTLHVGDAIIVGSTYGRIRAMFDDTGKKIKSAGPSIPVEVLGLSEVPEAGDRFNQVKDEKTARIMADKRKDKEKSDSLMSGNRVSLEDLYSQIKEGKVKELGIIVKADVQGSVQAINQSLEKLSTDDVKVRVIHSGVGAITETDITLATASNAIVIGFNVRPDNNAVAQADKENVEIKTYRIIYDAIEDVKSAMIGMLEPEYKEVILGSAEVRETYKISNVGTIAGCYVLNGKLQRNAETRVIRDGIVIFESNLSSLKRFKDDVKEVNTGYECGLTVEKFNDVKEGDILECFMMEAIKRKEL.

The region spanning 186–355 (KRPPIVTVMG…LLTAEMLELK (170 aa)) is the tr-type G domain. A G1 region spans residues 195–202 (GHVDHGKT). 195 to 202 (GHVDHGKT) provides a ligand contact to GTP. The interval 220–224 (GITQH) is G2. The tract at residues 241–244 (DTPG) is G3. Residues 241 to 245 (DTPGH) and 295 to 298 (NKID) contribute to the GTP site. The tract at residues 295–298 (NKID) is G4. The G5 stretch occupies residues 331–333 (SAK).

Belongs to the TRAFAC class translation factor GTPase superfamily. Classic translation factor GTPase family. IF-2 subfamily.

It localises to the cytoplasm. Functionally, one of the essential components for the initiation of protein synthesis. Protects formylmethionyl-tRNA from spontaneous hydrolysis and promotes its binding to the 30S ribosomal subunits. Also involved in the hydrolysis of GTP during the formation of the 70S ribosomal complex. The sequence is that of Translation initiation factor IF-2 from Clostridium botulinum (strain Eklund 17B / Type B).